The chain runs to 159 residues: Probable NADH dehydrogenase [ubiquinone] 1 alpha subcomplex subunit 12 (159 aa).

The protein belongs to the complex I NDUFA12 subunit family. As to quaternary structure, complex I is composed of at least 49 different subunits.

The protein localises to the mitochondrion inner membrane. Accessory subunit of the mitochondrial membrane respiratory chain NADH dehydrogenase (Complex I), that is believed not to be involved in catalysis. Complex I functions in the transfer of electrons from NADH to the respiratory chain. The immediate electron acceptor for the enzyme is believed to be ubiquinone. This chain is Probable NADH dehydrogenase [ubiquinone] 1 alpha subcomplex subunit 12, found in Arabidopsis thaliana (Mouse-ear cress).